We begin with the raw amino-acid sequence, 426 residues long: Proline--tRNA ligase (426 aa).

The protein belongs to the class-II aminoacyl-tRNA synthetase family. ProS type 2 subfamily. As to quaternary structure, homodimer.

It is found in the cytoplasm. It carries out the reaction tRNA(Pro) + L-proline + ATP = L-prolyl-tRNA(Pro) + AMP + diphosphate. Functionally, catalyzes the attachment of proline to tRNA(Pro) in a two-step reaction: proline is first activated by ATP to form Pro-AMP and then transferred to the acceptor end of tRNA(Pro). The chain is Proline--tRNA ligase from Rickettsia rickettsii (strain Iowa).